Reading from the N-terminus, the 371-residue chain is Dihydroorotate dehydrogenase (quinone) (371 aa).

Residues 79–83 and Thr103 contribute to the FMN site; that span reads AGFDK. Residue Lys83 coordinates substrate. 128-132 contacts substrate; sequence NRMGF. Residues Asn156 and Asn189 each coordinate FMN. Asn189 is a substrate binding site. Residue Ser192 is the Nucleophile of the active site. Residue Asn194 coordinates substrate. Residues Lys225 and Thr253 each coordinate FMN. 254-255 contributes to the substrate binding site; that stretch reads NT. FMN-binding positions include Gly279, Gly308, and 329–330; that span reads YT.

The protein belongs to the dihydroorotate dehydrogenase family. Type 2 subfamily. In terms of assembly, monomer. Requires FMN as cofactor.

It is found in the cell membrane. The enzyme catalyses (S)-dihydroorotate + a quinone = orotate + a quinol. It functions in the pathway pyrimidine metabolism; UMP biosynthesis via de novo pathway; orotate from (S)-dihydroorotate (quinone route): step 1/1. In terms of biological role, catalyzes the conversion of dihydroorotate to orotate with quinone as electron acceptor. The polypeptide is Dihydroorotate dehydrogenase (quinone) (Corynebacterium glutamicum (strain R)).